Consider the following 632-residue polypeptide: Mitochondrial distribution and morphology protein 34 (632 aa).

The 203-residue stretch at 1-203 folds into the SMP-LTD domain; it reads MSFKVNWNSL…LPTLIHQLSL (203 aa). Disordered stretches follow at residues 221-253 and 384-435; these read ANAS…TSSL and KPKR…SSTL. Residues 224 to 252 are compositionally biased toward low complexity; that stretch reads STSSSSTSSTSSSTTSSSSSSSPSSFTSS. The span at 384–400 shows a compositional bias: basic residues; the sequence is KPKRRVIRLGKSKNKSK. Over residues 401–412 the composition is skewed to basic and acidic residues; that stretch reads SKTETKTEHNDE. Positions 422–435 are enriched in low complexity; sequence PLSSTPASSSSSTL.

It belongs to the MDM34 family. In terms of assembly, component of the ER-mitochondria encounter structure (ERMES) or MDM complex, composed of MMM1, MDM10, MDM12 and MDM34.

The protein localises to the mitochondrion outer membrane. Component of the ERMES/MDM complex, which serves as a molecular tether to connect the endoplasmic reticulum (ER) and mitochondria. Components of this complex are involved in the control of mitochondrial shape and protein biogenesis, and function in nonvesicular lipid trafficking between the ER and mitochondria. MDM34 is required for the interaction of the ER-resident membrane protein MMM1 and the outer mitochondrial membrane-resident beta-barrel protein MDM10. This is Mitochondrial distribution and morphology protein 34 from Lodderomyces elongisporus (strain ATCC 11503 / CBS 2605 / JCM 1781 / NBRC 1676 / NRRL YB-4239) (Yeast).